The chain runs to 1227 residues: Splicing factor 3B subunit 3 (1227 aa).

The protein belongs to the RSE1 family. Identified in the spliceosome A complex; remains associated with the spliceosome throughout the splicing process. Component of the spliceosome B complex. Identified in the spliceosome C complex. Identified in the spliceosome E complex. Component of the U11/U12 snRNPs that are part of the U12-type spliceosome. Component of splicing factor SF3B complex. Identified in the SAGA transcription regulatory histone acetylation (HAT) complex; the interaction is RNA-independent.

The protein resides in the nucleus. In terms of biological role, involved in pre-mRNA splicing as a component of the splicing factor SF3B complex, a constituent of the spliceosome. SF3B complex is required for 'A' complex assembly formed by the stable binding of U2 snRNP to the branchpoint sequence (BPS) in pre-mRNA. Sequence independent binding of SF3A/SF3B complex upstream of the branch site is essential, it may anchor U2 snRNP to the pre-mRNA. May also be involved in the assembly of the 'E' complex. Also belongs to the minor U12-dependent spliceosome, which is involved in the splicing of rare class of nuclear pre-mRNA intron. The chain is Splicing factor 3B subunit 3 from Drosophila melanogaster (Fruit fly).